Reading from the N-terminus, the 139-residue chain is Coat protein TP2 (139 aa).

It localises to the virion. This Thermoproteus tenax virus 1 (strain KRA1) (TTV1) protein is Coat protein TP2.